The sequence spans 275 residues: uncharacterized protein (275 aa).

Positions 171–268 constitute an HTH araC/xylS-type domain; sequence KMVCEFLEEH…GLTPKQYMKI (98 aa). 2 DNA-binding regions (H-T-H motif) span residues 188–209 and 235–258; these read NDLS…TKQK and PIDA…KRQV.

This is an uncharacterized protein from Bacillus subtilis (strain 168).